Consider the following 158-residue polypeptide: Endoribonuclease YbeY (158 aa).

His-119, His-123, and Asp-129 together coordinate Zn(2+).

It belongs to the endoribonuclease YbeY family. The cofactor is Zn(2+).

The protein localises to the cytoplasm. In terms of biological role, single strand-specific metallo-endoribonuclease involved in late-stage 70S ribosome quality control and in maturation of the 3' terminus of the 16S rRNA. This Chlamydia caviae (strain ATCC VR-813 / DSM 19441 / 03DC25 / GPIC) (Chlamydophila caviae) protein is Endoribonuclease YbeY.